A 197-amino-acid chain; its full sequence is MQLQVARIGKPHGIRGEVTVQVLTDAPEDRFIPGTRFVVEPASAGPLTVDSARWNKDILLLGFEGIETRNQAEALRGAKLFIETEELEEEDDEGWYEHELVGLDVRVGDAVVGTISGLRTLPVQDLIVVESPDGKEILIPFVEEIVPEVNVGEKYILVTPPPGLFEINVEDSGETSDAGESGPGEAEPGKAEAGDNA.

Positions 92 to 164 (DEGWYEHELV…YILVTPPPGL (73 aa)) constitute a PRC barrel domain. The interval 167-197 (INVEDSGETSDAGESGPGEAEPGKAEAGDNA) is disordered. A compositionally biased stretch (low complexity) spans 176–186 (SDAGESGPGEA). The segment covering 187 to 197 (EPGKAEAGDNA) has biased composition (basic and acidic residues).

It belongs to the RimM family. As to quaternary structure, binds ribosomal protein uS19.

The protein resides in the cytoplasm. Its function is as follows. An accessory protein needed during the final step in the assembly of 30S ribosomal subunit, possibly for assembly of the head region. Essential for efficient processing of 16S rRNA. May be needed both before and after RbfA during the maturation of 16S rRNA. It has affinity for free ribosomal 30S subunits but not for 70S ribosomes. This Arthrobacter sp. (strain FB24) protein is Ribosome maturation factor RimM.